Reading from the N-terminus, the 419-residue chain is UDP-N-acetylglucosamine 1-carboxyvinyltransferase (419 aa).

22 to 23 (KN) provides a ligand contact to phosphoenolpyruvate. A UDP-N-acetyl-alpha-D-glucosamine-binding site is contributed by arginine 91. Cysteine 115 functions as the Proton donor in the catalytic mechanism. At cysteine 115 the chain carries 2-(S-cysteinyl)pyruvic acid O-phosphothioketal. UDP-N-acetyl-alpha-D-glucosamine-binding positions include 120–124 (RPVDL), 160–163 (KVSV), aspartate 305, and isoleucine 327.

This sequence belongs to the EPSP synthase family. MurA subfamily.

The protein localises to the cytoplasm. The enzyme catalyses phosphoenolpyruvate + UDP-N-acetyl-alpha-D-glucosamine = UDP-N-acetyl-3-O-(1-carboxyvinyl)-alpha-D-glucosamine + phosphate. It functions in the pathway cell wall biogenesis; peptidoglycan biosynthesis. Functionally, cell wall formation. Adds enolpyruvyl to UDP-N-acetylglucosamine. In Cronobacter sakazakii (strain ATCC BAA-894) (Enterobacter sakazakii), this protein is UDP-N-acetylglucosamine 1-carboxyvinyltransferase.